A 1354-amino-acid chain; its full sequence is Rho-associated protein kinase 1 (1354 aa).

S2 bears the N-acetylserine mark. The region spanning 76–338 (YEVVKVIGRG…VEEIKRHLFF (263 aa)) is the Protein kinase domain. ATP is bound by residues 82–90 (IGRGAFGEV) and K105. Residue D198 is the Proton acceptor of the active site. An AGC-kinase C-terminal domain is found at 341 to 409 (DQWAWETLRD…YSNRRYLPSA (69 aa)). Residues 368-727 (FDDLEEDKGD…KKLKEEREAR (360 aa)) are interaction with FHOD1. Residues 422 to 692 (KSLQESLQKT…RLEQEVNEHK (271 aa)) are a coiled coil. The region spanning 479–556 (SAVSQIEKEK…LEEANDLLRT (78 aa)) is the REM-1 domain. The segment at 707–946 (EAKSVAMCEM…TVSRLEETNS (240 aa)) is SHROOM3 binding. The region spanning 949–1015 (TKDIEMLRKE…LAEIMNRKDF (67 aa)) is the RhoBD domain. Residues 998–1010 (LKTQAVNKLAEIM) are RHOA binding. Positions 1011–1102 (NRKDFKIDRK…KLLDLSDSTS (92 aa)) form a coiled coil. Phosphoserine occurs at positions 1105 and 1108. Residues 1115–1354 (NLPESRIEGW…VVKNTSGKTS (240 aa)) form an auto-inhibitory region. The PH domain maps to 1118–1317 (ESRIEGWLSV…WVTHLVKKIP (200 aa)). Residues 1228–1283 (GHEFIPTLYHFPANCEACAKPLWHVFKPPPALECRRCHVKCHRDHLDKKEDLISPC) form a Phorbol-ester/DAG-type zinc finger. S1328 carries the phosphoserine modification. The tract at residues 1333 to 1354 (STRSTANQSFRKVVKNTSGKTS) is disordered.

This sequence belongs to the protein kinase superfamily. AGC Ser/Thr protein kinase family. In terms of assembly, homodimer. Interacts with RHOA (activated by GTP), RHOB, RHOC, GEM, MYLC2B, RHOE, PPP1R12A, LIMK1, LIMK2, TSG101, CHORDC1, DAPK3, PFN1 and JIP3. Interacts with FHOD1 in a Src-dependent manner. Interacts with PTEN. Interacts with ITGB1BP1 (via N-terminus and PTB domain). Interacts with SHROOM3. Mg(2+) is required as a cofactor. Autophosphorylated on serine and threonine residues. Post-translationally, cleaved by caspase-3 during apoptosis. This leads to constitutive activation of the kinase and membrane blebbing. As to expression, highly expressed in brain, heart, lung, liver, stomach, spleen, kidney, testis, muscle, embryo and placenta.

The protein resides in the cytoplasm. The protein localises to the cytoskeleton. Its subcellular location is the microtubule organizing center. It is found in the centrosome. It localises to the centriole. The protein resides in the golgi apparatus membrane. The protein localises to the cell projection. Its subcellular location is the bleb. It is found in the cell membrane. It localises to the lamellipodium. The protein resides in the ruffle. It carries out the reaction L-seryl-[protein] + ATP = O-phospho-L-seryl-[protein] + ADP + H(+). The enzyme catalyses L-threonyl-[protein] + ATP = O-phospho-L-threonyl-[protein] + ADP + H(+). Its activity is regulated as follows. Activated by RHOA binding. Inhibited by Y-27632. Functionally, protein kinase which is a key regulator of the actin cytoskeleton and cell polarity. Involved in regulation of smooth muscle contraction, actin cytoskeleton organization, stress fiber and focal adhesion formation, neurite retraction, cell adhesion and motility via phosphorylation of DAPK3, GFAP, LIMK1, LIMK2, MYL9/MLC2, TPPP, PFN1 and PPP1R12A. Phosphorylates FHOD1 and acts synergistically with it to promote SRC-dependent non-apoptotic plasma membrane blebbing. Phosphorylates JIP3 and regulates the recruitment of JNK to JIP3 upon UVB-induced stress. Acts as a suppressor of inflammatory cell migration by regulating PTEN phosphorylation and stability. Acts as a negative regulator of VEGF-induced angiogenic endothelial cell activation. Required for centrosome positioning and centrosome-dependent exit from mitosis. Plays a role in terminal erythroid differentiation. Inhibits podocyte motility via regulation of actin cytoskeletal dynamics and phosphorylation of CFL1. Promotes keratinocyte terminal differentiation. Involved in osteoblast compaction through the fibronectin fibrillogenesis cell-mediated matrix assembly process, essential for osteoblast mineralization. May regulate closure of the eyelids and ventral body wall by inducing the assembly of actomyosin bundles. This is Rho-associated protein kinase 1 (Rock1) from Mus musculus (Mouse).